Here is a 244-residue protein sequence, read N- to C-terminus: Na(+)-translocating NADH-quinone reductase subunit E (244 aa).

6 helical membrane-spanning segments follow: residues 11 to 31 (LLGI…TFLG), 50 to 70 (MSVA…HYFI), 90 to 110 (FLEL…LEVL), 123 to 143 (GIFL…LFGI), 153 to 173 (VVFS…FATI), and 191 to 211 (ISFI…GIDI). Positions 222-236 (VTNIATDSPQPNTHS) are enriched in polar residues. A disordered region spans residues 222-244 (VTNIATDSPQPNTHSSSEEPKAS).

This sequence belongs to the NqrDE/RnfAE family. Composed of six subunits; NqrA, NqrB, NqrC, NqrD, NqrE and NqrF.

Its subcellular location is the cell inner membrane. It carries out the reaction a ubiquinone + n Na(+)(in) + NADH + H(+) = a ubiquinol + n Na(+)(out) + NAD(+). In terms of biological role, NQR complex catalyzes the reduction of ubiquinone-1 to ubiquinol by two successive reactions, coupled with the transport of Na(+) ions from the cytoplasm to the periplasm. NqrA to NqrE are probably involved in the second step, the conversion of ubisemiquinone to ubiquinol. This chain is Na(+)-translocating NADH-quinone reductase subunit E, found in Chlamydia trachomatis serovar A (strain ATCC VR-571B / DSM 19440 / HAR-13).